The primary structure comprises 226 residues: ATP-dependent dethiobiotin synthetase BioD (226 aa).

Residue 12 to 17 (GVGKTV) participates in ATP binding. Position 16 (Thr-16) interacts with Mg(2+). Residue Lys-37 is part of the active site. Residue Thr-41 coordinates substrate. Residues Asp-49, 108 to 111 (EGAG), 169 to 170 (GS), and 197 to 199 (PAG) contribute to the ATP site. Residues Asp-49 and Glu-108 each coordinate Mg(2+).

Belongs to the dethiobiotin synthetase family. Homodimer. Mg(2+) serves as cofactor.

Its subcellular location is the cytoplasm. It catalyses the reaction (7R,8S)-7,8-diammoniononanoate + CO2 + ATP = (4R,5S)-dethiobiotin + ADP + phosphate + 3 H(+). The protein operates within cofactor biosynthesis; biotin biosynthesis; biotin from 7,8-diaminononanoate: step 1/2. Catalyzes a mechanistically unusual reaction, the ATP-dependent insertion of CO2 between the N7 and N8 nitrogen atoms of 7,8-diaminopelargonic acid (DAPA, also called 7,8-diammoniononanoate) to form a ureido ring. This is ATP-dependent dethiobiotin synthetase BioD from Mycobacterium leprae (strain Br4923).